We begin with the raw amino-acid sequence, 100 residues long: Urease subunit gamma (100 aa).

This sequence belongs to the urease gamma subunit family. As to quaternary structure, heterotrimer of UreA (gamma), UreB (beta) and UreC (alpha) subunits. Three heterotrimers associate to form the active enzyme.

It is found in the cytoplasm. It carries out the reaction urea + 2 H2O + H(+) = hydrogencarbonate + 2 NH4(+). Its pathway is nitrogen metabolism; urea degradation; CO(2) and NH(3) from urea (urease route): step 1/1. In Photorhabdus laumondii subsp. laumondii (strain DSM 15139 / CIP 105565 / TT01) (Photorhabdus luminescens subsp. laumondii), this protein is Urease subunit gamma.